A 252-amino-acid polypeptide reads, in one-letter code: Transmembrane ascorbate-dependent reductase CYB561 (252 aa).

M1 carries the post-translational modification N-acetylmethionine. Over M1 to Y17 the chain is Cytoplasmic. Residues V18–M38 traverse the membrane as a helical segment. In terms of domain architecture, Cytochrome b561 spans F20–T221. Residues Y39 to N52 are Vesicular-facing. Residues V53–Y73 form a helical membrane-spanning segment. Heme b contacts are provided by H54, R74, and K81. Residues R74 to V86 are Cytoplasmic-facing. L-ascorbate-binding residues include K81 and K85. A helical transmembrane segment spans residues L87 to F107. Heme b contacts are provided by residues H88, D117 to S120, and H122. Over E108–C125 the chain is Vesicular. The helical transmembrane segment at G126–F146 threads the bilayer. Over P147–P159 the chain is Cytoplasmic. R154 is an L-ascorbate binding site. A helical membrane pass occupies residues Q160 to L180. 2 residues coordinate heme b: H161 and E182. Residues K181–G199 are Vesicular-facing. A helical transmembrane segment spans residues V200–L220. Residues T221–Q252 lie on the Cytoplasmic side of the membrane. K226 lines the heme b pocket. Phosphoserine occurs at positions 248 and 250.

Heme b serves as cofactor. In terms of tissue distribution, expressed in the adrenal medulla and all brain regions, but not in visceral organs.

It is found in the cytoplasmic vesicle. Its subcellular location is the secretory vesicle. It localises to the chromaffin granule membrane. The enzyme catalyses monodehydro-L-ascorbate radical(out) + L-ascorbate(in) = monodehydro-L-ascorbate radical(in) + L-ascorbate(out). Its function is as follows. Transmembrane reductase that uses ascorbate as an electron donor in the cytoplasm and transfers electrons across membranes to reduce monodehydro-L-ascorbate radical in the lumen of secretory vesicles. It is therefore involved the regeneration and homeostasis within secretory vesicles of ascorbate which in turn provides reducing equivalents needed to support the activity of intravesicular enzymes. This chain is Transmembrane ascorbate-dependent reductase CYB561 (CYB561), found in Bos taurus (Bovine).